Reading from the N-terminus, the 78-residue chain is Large ribosomal subunit protein bL28 (78 aa).

The segment at 1–25 is disordered; the sequence is MSRVCQVTGKRPAVGNNRSHARNAT.

This sequence belongs to the bacterial ribosomal protein bL28 family.

The chain is Large ribosomal subunit protein bL28 from Vibrio vulnificus (strain CMCP6).